The following is a 271-amino-acid chain: Shikimate dehydrogenase (NADP(+)) (271 aa).

Shikimate contacts are provided by residues 19-21 and Thr-65; that span reads SLS. The active-site Proton acceptor is the Lys-69. An NADP(+)-binding site is contributed by Glu-81. Asn-90 and Asp-105 together coordinate shikimate. Residues 128–132, 150–155, and Ile-211 each bind NADP(+); these read GAGGA and NRTIEK. Position 213 (Tyr-213) interacts with shikimate. Position 234 (Gly-234) interacts with NADP(+).

This sequence belongs to the shikimate dehydrogenase family. In terms of assembly, homodimer.

The enzyme catalyses shikimate + NADP(+) = 3-dehydroshikimate + NADPH + H(+). It functions in the pathway metabolic intermediate biosynthesis; chorismate biosynthesis; chorismate from D-erythrose 4-phosphate and phosphoenolpyruvate: step 4/7. Its function is as follows. Involved in the biosynthesis of the chorismate, which leads to the biosynthesis of aromatic amino acids. Catalyzes the reversible NADPH linked reduction of 3-dehydroshikimate (DHSA) to yield shikimate (SA). The chain is Shikimate dehydrogenase (NADP(+)) from Pyrococcus furiosus (strain ATCC 43587 / DSM 3638 / JCM 8422 / Vc1).